Reading from the N-terminus, the 644-residue chain is Serine/threonine kinase YeaG (644 aa).

The protein belongs to the PrkA family. Monomer.

It localises to the cytoplasm. The catalysed reaction is L-seryl-[protein] + ATP = O-phospho-L-seryl-[protein] + ADP + H(+). The enzyme catalyses L-threonyl-[protein] + ATP = O-phospho-L-threonyl-[protein] + ADP + H(+). Its function is as follows. Kinase that plays a role in the adaptation to sustained nitrogen starvation. This chain is Serine/threonine kinase YeaG (yeaG), found in Escherichia coli O157:H7.